The chain runs to 508 residues: MVTIQADEISNIIRERIEQYNREVKIVNTGTVLQVGDGIARIHGLDEVMAGELVEFQEGTIGIALNLESTNVGVVLMGDGLLIQEGSSVKATGKIAQIPVSEAYLGRVINALAKPIDGRGEISSSEYRLIESPAPGIISRRSVYEPLQTGLIAIDSMIPIGRGQRELIIGDRQTGKTAVATDTILNQQGQNVICVYVAIGQKASSVAQVVTTFQEKGAMEYTIVVAETADSPATLQYLAPYTGAALAEYFMYRERHTLIIYDDLSKQAQAYRQMSLLLRRPPGREAYPGDVFYLHSRLLERAAKLSSLLGEGSMTALPIVETQSGDVSAYIPTNVISITDGQIFLSADLFNAGIRPAINVGISVSRVGSAAQIKAMKQVAGKLKLELAQFAELEAFAQFASDLDKATQNQLARGQRLRELLKQSQSAPLAVEEQILTIYTGTNGYLDSLEVGQVRKFLVELRTYLKTNKPQFQEIISSTKIFTEEAEAILKEAIQEQRERFILQEQAA.

170-177 lines the ATP pocket; it reads GDRQTGKT.

The protein belongs to the ATPase alpha/beta chains family. As to quaternary structure, F-type ATPases have 2 components, CF(1) - the catalytic core - and CF(0) - the membrane proton channel. CF(1) has five subunits: alpha(3), beta(3), gamma(1), delta(1), epsilon(1). CF(0) has four main subunits: a, b, b' and c.

Its subcellular location is the plastid. It is found in the chloroplast thylakoid membrane. The enzyme catalyses ATP + H2O + 4 H(+)(in) = ADP + phosphate + 5 H(+)(out). In terms of biological role, produces ATP from ADP in the presence of a proton gradient across the membrane. The alpha chain is a regulatory subunit. In Helianthus annuus (Common sunflower), this protein is ATP synthase subunit alpha, chloroplastic.